The following is a 203-amino-acid chain: tRNA (cytidine(56)-2'-O)-methyltransferase (203 aa).

Residues Leu80, 109–113, and 127–134 each bind S-adenosyl-L-methionine; these read GAEKV and IGNQPHSE. The tract at residues 178–203 is disordered; the sequence is AEQDKAEGKATPGKNWENSGFTGDNP. Polar residues predominate over residues 193 to 203; sequence WENSGFTGDNP.

It belongs to the aTrm56 family. As to quaternary structure, homodimer.

The protein localises to the cytoplasm. The catalysed reaction is cytidine(56) in tRNA + S-adenosyl-L-methionine = 2'-O-methylcytidine(56) in tRNA + S-adenosyl-L-homocysteine + H(+). Functionally, specifically catalyzes the AdoMet-dependent 2'-O-ribose methylation of cytidine at position 56 in tRNAs. The polypeptide is tRNA (cytidine(56)-2'-O)-methyltransferase (Pyrococcus horikoshii (strain ATCC 700860 / DSM 12428 / JCM 9974 / NBRC 100139 / OT-3)).